Reading from the N-terminus, the 184-residue chain is Lysozyme 1 (184 aa).

The N-terminal stretch at 1-20 (MNGLILFCAVVFATAVCTYG) is a signal peptide. Residues 69 to 184 (TGMVSQQCLR…WRRVQAQGCN (116 aa)) enclose the I-type lysozyme domain. Cystine bridges form between Cys76–Cys152, Cys81–Cys87, Cys92–Cys101, Cys114–Cys134, Cys124–Cys130, and Cys148–Cys166. Glu84 acts as the Proton donor in catalysis. Asp95 (nucleophile) is an active-site residue. 107-113 (KRAYWID) contacts substrate. Residues Tyr138 and 159–161 (HNG) contribute to the substrate site.

Hemolymph, labial palps, non-vesiculated cells of mantle connective tissue, cells of interlamellar junctions and epithelia surrounding the water tubes of the gills.

Its subcellular location is the secreted. It carries out the reaction Hydrolysis of (1-&gt;4)-beta-linkages between N-acetylmuramic acid and N-acetyl-D-glucosamine residues in a peptidoglycan and between N-acetyl-D-glucosamine residues in chitodextrins.. Functionally, has antibacterial activity against the Gram-positive bacteria L.garvieae, M.luteus and Enterococcus sp., and the Gram-negative bacteria E.coli and V.vulnificus. Weak antibacterial activity against the Gram-negative bacterium A.hydrophila. No antibacterial activity detected against the Gram-positive bacterium S.iniae or against the Gram-negative bacterium E.ictaluri. Shows some chitinase activity but no isopeptidase activity. The chain is Lysozyme 1 from Crassostrea virginica (Eastern oyster).